We begin with the raw amino-acid sequence, 213 residues long: Putative 3-methyladenine DNA glycosylase (213 aa).

Residues 165-187 are disordered; the sequence is GTPVPPDQVRNGPRTGVSGDGGV.

It belongs to the DNA glycosylase MPG family.

This chain is Putative 3-methyladenine DNA glycosylase, found in Streptomyces avermitilis (strain ATCC 31267 / DSM 46492 / JCM 5070 / NBRC 14893 / NCIMB 12804 / NRRL 8165 / MA-4680).